A 408-amino-acid polypeptide reads, in one-letter code: MNITKMKLFYVILFFISSLQISNSIDFNYPSAFNFGDSNSDTGDLVAGLGIRLDLPNGQNSFKTSSQRFCDGRLVIDFLMDEMDLPFLNPYLDSLGLPNFKKGCNFAAAGSTILPANPTSVSPFSFDLQISQFIRFKSRAIELLSKTGRKYEKYLPPIDYYSKGLYMIDIGQNDIAGAFYSKTLDQVLASIPSILETFEAGLKRLYEEGGRNIWIHNTGPLGCLAQNIAKFGTDSTKLDEFGCVSSHNQAAKLFNLQLHAMSNKFQAQYPDANVTYVDIFSIKSNLIANYSRFGKHFTKPLIDLNHLENVGYNKILNVLGFEKPLMACCGVGGAPLNYDSRITCGQTKVLDGISVTAKACNDSSEYINWDGIHYTEAANEFVSSQILTGKYSDPPFSDQMPFFLTLKF.

The first 24 residues, 1–24 (MNITKMKLFYVILFFISSLQISNS), serve as a signal peptide directing secretion. Ser38 serves as the catalytic Nucleophile. Residues Asn273, Asn289, and Asn361 are each glycosylated (N-linked (GlcNAc...) asparagine). Residues Asp370 and His373 contribute to the active site.

This sequence belongs to the 'GDSL' lipolytic enzyme family.

The protein resides in the secreted. This Arabidopsis thaliana (Mouse-ear cress) protein is GDSL esterase/lipase At1g54790.